We begin with the raw amino-acid sequence, 347 residues long: Lipoyl synthase (347 aa).

Cys-77, Cys-82, Cys-88, Cys-103, Cys-107, Cys-110, and Ser-317 together coordinate [4Fe-4S] cluster. Residues 89–306 form the Radical SAM core domain; the sequence is FADGTATFMI…MDYGKKIGFF (218 aa).

It belongs to the radical SAM superfamily. Lipoyl synthase family. The cofactor is [4Fe-4S] cluster.

Its subcellular location is the cytoplasm. The catalysed reaction is [[Fe-S] cluster scaffold protein carrying a second [4Fe-4S](2+) cluster] + N(6)-octanoyl-L-lysyl-[protein] + 2 oxidized [2Fe-2S]-[ferredoxin] + 2 S-adenosyl-L-methionine + 4 H(+) = [[Fe-S] cluster scaffold protein] + N(6)-[(R)-dihydrolipoyl]-L-lysyl-[protein] + 4 Fe(3+) + 2 hydrogen sulfide + 2 5'-deoxyadenosine + 2 L-methionine + 2 reduced [2Fe-2S]-[ferredoxin]. Its pathway is protein modification; protein lipoylation via endogenous pathway; protein N(6)-(lipoyl)lysine from octanoyl-[acyl-carrier-protein]: step 2/2. Functionally, catalyzes the radical-mediated insertion of two sulfur atoms into the C-6 and C-8 positions of the octanoyl moiety bound to the lipoyl domains of lipoate-dependent enzymes, thereby converting the octanoylated domains into lipoylated derivatives. In Psychrobacter arcticus (strain DSM 17307 / VKM B-2377 / 273-4), this protein is Lipoyl synthase.